Reading from the N-terminus, the 72-residue chain is Translation initiation factor IF-1 (72 aa).

The S1-like domain maps to 1–72 (MAKEDVIEVE…NRGRIIYRFK (72 aa)).

The protein belongs to the IF-1 family. In terms of assembly, component of the 30S ribosomal translation pre-initiation complex which assembles on the 30S ribosome in the order IF-2 and IF-3, IF-1 and N-formylmethionyl-tRNA(fMet); mRNA recruitment can occur at any time during PIC assembly.

Its subcellular location is the cytoplasm. Its function is as follows. One of the essential components for the initiation of protein synthesis. Stabilizes the binding of IF-2 and IF-3 on the 30S subunit to which N-formylmethionyl-tRNA(fMet) subsequently binds. Helps modulate mRNA selection, yielding the 30S pre-initiation complex (PIC). Upon addition of the 50S ribosomal subunit IF-1, IF-2 and IF-3 are released leaving the mature 70S translation initiation complex. The polypeptide is Translation initiation factor IF-1 (Syntrophomonas wolfei subsp. wolfei (strain DSM 2245B / Goettingen)).